The primary structure comprises 126 residues: Profilin-2 (126 aa).

S2 bears the Blocked amino end (Ser) mark. Position 104 is an N6,N6,N6-trimethyllysine (K104).

Belongs to the profilin family. Occurs in many kinds of cells as a complex with monomeric actin in a 1:1 ratio.

It is found in the cytoplasm. It localises to the cytoskeleton. Its function is as follows. Binds to actin and affects the structure of the cytoskeleton. At high concentrations, profilin prevents the polymerization of actin, whereas it enhances it at low concentrations. By binding to PIP2, it inhibits the formation of IP3 and DG. The chain is Profilin-2 from Acanthamoeba castellanii (Amoeba).